The chain runs to 215 residues: Somatotropin (215 aa).

The N-terminal stretch at 1–25 (MAPGARISLLLLITFTLLGPQRSGA) is a signal peptide. H44 contributes to the Zn(2+) binding site. Cysteines 77 and 188 form a disulfide. Residue S130 is modified to Phosphoserine. E197 is a binding site for Zn(2+). C205 and C213 are disulfide-bonded.

The protein belongs to the somatotropin/prolactin family.

It is found in the secreted. Functionally, plays an important role in growth control. Its major role in stimulating body growth is to stimulate the liver and other tissues to secrete IGF1. It stimulates both the differentiation and proliferation of myoblasts. It also stimulates amino acid uptake and protein synthesis in muscle and other tissues. In Trichosurus vulpecula (Brush-tailed possum), this protein is Somatotropin (GH1).